A 698-amino-acid chain; its full sequence is MKSVKKSFQYGNHTVTLETGGVARQADGAVLVNMSDTVVLVTAVGRKEADPGKGFFPLTVNYQERTYAAGKIPGGFFKREGRPSEKETLTCRLIDRPIRPLFPEGFYNEVQVVATVLSMNPEVDADIPALIGASAALSISGIPFDGPIGAARVGYKDGEYLLNPTFEETAASDLDLVVAGTENAVLMVESEANQLPEEAMLGAVLYGHEQMQVAIQAINELTAEAGKPRWDWHPPQGDAALETAIKDLVGDDLAAAYQIPEKQERQNRIGELRQRAVEALGENREEEGGWPEKDVGDAFKGLEKDIVRGRILAGERRIDGRDTRTVRPIDIEVGSLPRTHGSAIFTRGETQAVVVTTLGTGRDAQIIDAIEGERKEQFMLHYNFPPYCVGETGFMGTPKRREIGHGKLAKRGIEAVMPAADDCPYVIRVVSEITESNGSSSMATVCGTSLSLMDAGVPVKAPVAGIAMGLIKEDEQFAVLSDILGDEDHLGDMDFKVAGTESGVTALQMDIKIQGITREIMEQALEQAREGRLHILGEMNNAISGPRSEMSEYAPRLLTIRIDPDKIRDVIGKGGATIRALTEETGTTIDISDDGKVTIASADKAAADEARRRIELLTADVEVGTVYEGKVSKLMDFGAFVNILPGRDGLVHISQISNERVERVGDYLKEGDTVRVKVLEVDRQGRIRLSMKAVQDGE.

Residues Asp-488 and Asp-494 each contribute to the Mg(2+) site. Positions 555-614 (PRLLTIRIDPDKIRDVIGKGGATIRALTEETGTTIDISDDGKVTIASADKAAADEARRRI) constitute a KH domain. The S1 motif domain occupies 624–692 (GTVYEGKVSK…RQGRIRLSMK (69 aa)).

This sequence belongs to the polyribonucleotide nucleotidyltransferase family. As to quaternary structure, component of the RNA degradosome, which is a multiprotein complex involved in RNA processing and mRNA degradation. Mg(2+) serves as cofactor.

Its subcellular location is the cytoplasm. It carries out the reaction RNA(n+1) + phosphate = RNA(n) + a ribonucleoside 5'-diphosphate. Its function is as follows. Involved in mRNA degradation. Catalyzes the phosphorolysis of single-stranded polyribonucleotides processively in the 3'- to 5'-direction. The sequence is that of Polyribonucleotide nucleotidyltransferase from Alkalilimnicola ehrlichii (strain ATCC BAA-1101 / DSM 17681 / MLHE-1).